A 481-amino-acid polypeptide reads, in one-letter code: UDP-N-acetylmuramoyl-L-alanyl-D-glutamate--L-lysine ligase (481 aa).

Serine 42 provides a ligand contact to UDP-N-acetyl-alpha-D-muramoyl-L-alanyl-D-glutamate. 118–124 is a binding site for ATP; sequence GTKGKTT. UDP-N-acetyl-alpha-D-muramoyl-L-alanyl-D-glutamate is bound by residues glutamine 158, 160–161, serine 187, and arginine 195; that span reads TT. Position 229 is an N6-carboxylysine (lysine 229). The L-lysine recognition motif motif lies at 404 to 407; sequence DDPN.

It belongs to the MurCDEF family. MurE subfamily. Carboxylation is probably crucial for Mg(2+) binding and, consequently, for the gamma-phosphate positioning of ATP.

The protein resides in the cytoplasm. It catalyses the reaction UDP-N-acetyl-alpha-D-muramoyl-L-alanyl-D-glutamate + L-lysine + ATP = UDP-N-acetyl-alpha-D-muramoyl-L-alanyl-gamma-D-glutamyl-L-lysine + ADP + phosphate + H(+). The protein operates within cell wall biogenesis; peptidoglycan biosynthesis. In terms of biological role, catalyzes the addition of L-lysine to the nucleotide precursor UDP-N-acetylmuramoyl-L-alanyl-D-glutamate (UMAG) in the biosynthesis of bacterial cell-wall peptidoglycan. This is UDP-N-acetylmuramoyl-L-alanyl-D-glutamate--L-lysine ligase from Streptococcus pyogenes serotype M4 (strain MGAS10750).